The following is a 44-amino-acid chain: Protein PsbN (44 aa).

A helical transmembrane segment spans residues 6 to 26; the sequence is FFFTLFLWFFLLSITIYSIYI.

Belongs to the PsbN family.

The protein resides in the plastid. The protein localises to the chloroplast thylakoid membrane. Functionally, may play a role in photosystem I and II biogenesis. This Oedogonium cardiacum (Filamentous green alga) protein is Protein PsbN.